The chain runs to 547 residues: Chaperonin GroEL (547 aa).

ATP-binding positions include Thr-30–Pro-33, Lys-51, Asp-87–Thr-91, Gly-415, and Asp-495. The interval Pro-525–Met-547 is disordered. Positions Gly-531–Met-547 are enriched in gly residues.

Belongs to the chaperonin (HSP60) family. Forms a cylinder of 14 subunits composed of two heptameric rings stacked back-to-back. Interacts with the co-chaperonin GroES.

The protein localises to the cytoplasm. The enzyme catalyses ATP + H2O + a folded polypeptide = ADP + phosphate + an unfolded polypeptide.. Its function is as follows. Together with its co-chaperonin GroES, plays an essential role in assisting protein folding. The GroEL-GroES system forms a nano-cage that allows encapsulation of the non-native substrate proteins and provides a physical environment optimized to promote and accelerate protein folding. This is Chaperonin GroEL from Chromohalobacter salexigens (strain ATCC BAA-138 / DSM 3043 / CIP 106854 / NCIMB 13768 / 1H11).